Reading from the N-terminus, the 1683-residue chain is E3 ubiquitin-protein ligase SHPRH (1683 aa).

The segment at 1 to 43 is disordered; the sequence is MSSRRKRAPPVRVDEEKRQQLHWNMHEDRRNEPIIISDDDEQP. Positions 12–32 are enriched in basic and acidic residues; sequence RVDEEKRQQLHWNMHEDRRNE. The residue at position 266 (Ser-266) is a Phosphoserine. Residues 307 to 389 enclose the Helicase ATP-binding; first part domain; that stretch reads YQREAVNWML…TVEVLALILT (83 aa). Position 373–380 (373–380) interacts with ATP; the sequence is DEMGLGKT. One can recognise an H15 domain in the interval 438-512; it reads QCPPTRVMIL…GFSGTFTLGK (75 aa). The segment at 525–607 is disordered; that stretch reads KQAVGSPRKI…QGHCPATSDS (83 aa). Basic and acidic residues predominate over residues 534-547; that stretch reads IQKETRKSGNKDTD. The span at 568–588 shows a compositional bias: basic residues; it reads KSRRNRSKLRKKLVPSTKKGK. Ser-635 carries the phosphoserine modification. Residues 658–709 form a PHD-type zinc finger; sequence RFECICGELDQIDRKPRVQCLKCHLWQHAKCVNYDEKNLKIKPFYCPHCLVA. In terms of domain architecture, Helicase ATP-binding; second part spans 710-868; the sequence is MEPVSTRATL…FGLVVFLGIE (159 aa). A DEAQ box motif is present at residues 819 to 822; that stretch reads DEAQ. The segment at 1432 to 1479 adopts an RING-type zinc-finger fold; that stretch reads CPICARQLGKQWAVLTCGHCFCNECISIIIEQYSVGSHRSSIKCAICR. Residues 1514 to 1672 enclose the Helicase C-terminal domain; that stretch reads AVVRTLMKIQ…ASVLTVADLA (159 aa).

It belongs to the SNF2/RAD54 helicase family. Homodimer. Interacts with HLTF, PCNA, UBE2N and RAD18. As to expression, broadly expressed.

The enzyme catalyses S-ubiquitinyl-[E2 ubiquitin-conjugating enzyme]-L-cysteine + [acceptor protein]-L-lysine = [E2 ubiquitin-conjugating enzyme]-L-cysteine + N(6)-ubiquitinyl-[acceptor protein]-L-lysine.. It participates in protein modification; protein ubiquitination. Functionally, E3 ubiquitin-protein ligase involved in DNA repair. Upon genotoxic stress, accepts ubiquitin from the UBE2N-UBE2V2 E2 complex and transfers it to 'Lys-164' of PCNA which had been monoubiquitinated by UBE2A/B-RAD18, promoting the formation of non-canonical poly-ubiquitin chains linked through 'Lys-63'. The chain is E3 ubiquitin-protein ligase SHPRH (SHPRH) from Homo sapiens (Human).